Reading from the N-terminus, the 171-residue chain is uncharacterized protein (171 aa).

The tract at residues 123 to 171 (CTKRDLRNDPPPAYQPDDPLKDLRKNFEKKEKPTWNDVEKKKNGVFEFH) is disordered. Residues 140-171 (DPLKDLRKNFEKKEKPTWNDVEKKKNGVFEFH) show a composition bias toward basic and acidic residues.

This is an uncharacterized protein from Caenorhabditis elegans.